The primary structure comprises 108 residues: ATP synthase peripheral stalk subunit F6, mitochondrial (108 aa).

The N-terminal 32 residues, 1 to 32 (MILQRLFRFSSIIRSAVSVHFRRNIGVTAVAF), are a transit peptide targeting the mitochondrion. 3 positions are modified to N6-acetyllysine: lysine 41, lysine 46, and lysine 79. N6-acetyllysine; alternate is present on residues lysine 84, lysine 94, and lysine 99. N6-succinyllysine; alternate occurs at positions 84, 94, and 99. Lysine 105 is subject to N6-acetyllysine.

It belongs to the eukaryotic ATPase subunit F6 family. As to quaternary structure, component of the ATP synthase complex composed at least of ATP5F1A/subunit alpha, ATP5F1B/subunit beta, ATP5MC1/subunit c (homooctomer), MT-ATP6/subunit a, MT-ATP8/subunit 8, ATP5ME/subunit e, ATP5MF/subunit f, ATP5MG/subunit g, ATP5MK/subunit k, ATP5MJ/subunit j, ATP5F1C/subunit gamma, ATP5F1D/subunit delta, ATP5F1E/subunit epsilon, ATP5PF/subunit F6, ATP5PB/subunit b, ATP5PD/subunit d, ATP5PO/subunit OSCP. ATP synthase complex consists of a soluble F(1) head domain (subunits alpha(3) and beta(3)) - the catalytic core - and a membrane F(0) domain - the membrane proton channel (subunits c, a, 8, e, f, g, k and j). These two domains are linked by a central stalk (subunits gamma, delta, and epsilon) rotating inside the F1 region and a stationary peripheral stalk (subunits F6, b, d, and OSCP).

It is found in the mitochondrion. Its subcellular location is the mitochondrion inner membrane. Subunit F6, of the mitochondrial membrane ATP synthase complex (F(1)F(0) ATP synthase or Complex V) that produces ATP from ADP in the presence of a proton gradient across the membrane which is generated by electron transport complexes of the respiratory chain. ATP synthase complex consist of a soluble F(1) head domain - the catalytic core - and a membrane F(1) domain - the membrane proton channel. These two domains are linked by a central stalk rotating inside the F(1) region and a stationary peripheral stalk. During catalysis, ATP synthesis in the catalytic domain of F(1) is coupled via a rotary mechanism of the central stalk subunits to proton translocation. In vivo, can only synthesize ATP although its ATP hydrolase activity can be activated artificially in vitro. Part of the complex F(0) domain. Part of the complex F(0) domain and the peripheric stalk, which acts as a stator to hold the catalytic alpha(3)beta(3) subcomplex and subunit a/ATP6 static relative to the rotary elements. This chain is ATP synthase peripheral stalk subunit F6, mitochondrial, found in Macaca fascicularis (Crab-eating macaque).